Consider the following 464-residue polypeptide: Adenylyltransferase and sulfurtransferase MOCS3 (464 aa).

Residues Gly-101, Asp-122, 129-133 (NNMHR), Lys-146, and 190-191 (DN) each bind ATP. Zn(2+) is bound by residues Cys-231 and Cys-234. Residue Cys-248 is the Glycyl thioester intermediate; for adenylyltransferase activity of the active site. 2 residues coordinate Zn(2+): Cys-306 and Cys-309. A Rhodanese domain is found at 358–462 (KKEQHVLLDV…WAANVNPNFP (105 aa)). Catalysis depends on Cys-422, which acts as the Cysteine persulfide intermediate; for sulfurtransferase activity.

In the N-terminal section; belongs to the HesA/MoeB/ThiF family. UBA4 subfamily. The cofactor is Zn(2+).

It is found in the cytoplasm. It carries out the reaction [molybdopterin-synthase sulfur-carrier protein]-C-terminal Gly-Gly + ATP + H(+) = [molybdopterin-synthase sulfur-carrier protein]-C-terminal Gly-Gly-AMP + diphosphate. It catalyses the reaction [molybdopterin-synthase sulfur-carrier protein]-C-terminal Gly-Gly-AMP + S-sulfanyl-L-cysteinyl-[cysteine desulfurase] + AH2 = [molybdopterin-synthase sulfur-carrier protein]-C-terminal-Gly-aminoethanethioate + L-cysteinyl-[cysteine desulfurase] + A + AMP + 2 H(+). It participates in tRNA modification; 5-methoxycarbonylmethyl-2-thiouridine-tRNA biosynthesis. It functions in the pathway cofactor biosynthesis; molybdopterin biosynthesis. Its function is as follows. Plays a central role in 2-thiolation of mcm(5)S(2)U at tRNA wobble positions of cytosolic tRNA(Lys), tRNA(Glu) and tRNA(Gln). Also essential during biosynthesis of the molybdenum cofactor. Acts by mediating the C-terminal thiocarboxylation of sulfur carriers URM1 and MOCS2A. Its N-terminus first activates URM1 and MOCS2A as acyl-adenylates (-COAMP), then the persulfide sulfur on the catalytic cysteine is transferred to URM1 and MOCS2A to form thiocarboxylation (-COSH) of their C-terminus. The reaction probably involves hydrogen sulfide that is generated from the persulfide intermediate and that acts as a nucleophile towards URM1 and MOCS2A. Subsequently, a transient disulfide bond is formed. Does not use thiosulfate as sulfur donor; NFS1 probably acting as a sulfur donor for thiocarboxylation reactions. In Arabidopsis thaliana (Mouse-ear cress), this protein is Adenylyltransferase and sulfurtransferase MOCS3.